The chain runs to 508 residues: CXXC-type zinc finger protein 1 (508 aa).

The segment at 10 to 47 (EDVWKERCMNCIRCNDEKNCGTCWPCRNGKTCDMRKCF) adopts a CXXC-type zinc-finger fold. 2 disordered regions span residues 95–156 (QQVE…EPDK) and 453–508 (KSQS…TQNN). 2 stretches are compositionally biased toward low complexity: residues 113 to 123 (AAAAAQQRKAN) and 454 to 481 (SQSTSSSASAHGATTPISSTSSSSSSSS).

In terms of assembly, component of the SET2 complex (also known as the SET1/COMPASS complex), which contains at least set-2, swd-2.1, cfp-1, rbbp-5, wdr-5.1, dpy-30 and ash-2. Within the complex, interacts with wdr-5.1, ash-2 and dpy-30. Also interacts with the SIN3S complex, which contains at least sin-3, hda-1, athp-1 and mrg-1. Interacts with sin-3, hda-1 and mrg-1.

The protein localises to the nucleus. Transcriptional activator that exhibits a unique DNA binding specificity for CpG motifs; enriched at promoters containing the trimethylation mark on histone H3 'Lys-4' (H3K4me3). Forms part of the SET2 complex and interacts with the SIN3S HDAC complex at promoters. Required for H3K4 trimethylation and plays a repressive role in the expression of heat shock and salt-inducible genes. Required for fertility, in cooperation with class I histone deacetylases (HDACs). This is CXXC-type zinc finger protein 1 from Caenorhabditis elegans.